Consider the following 445-residue polypeptide: MSRKYFGTDGIRGRVGEFPITPDFVLKLGWAVGMAFRRQGNCRVLIGKDTRSSGYMFESAFEAGLSASGADTLLLGPMPTPGIAYLTRTFHAEAGVVISASHNPHDDNGIKFFSGQGTKLPDDVELMIEELLDAPMTVVESARLGKVSRINDAAGRYIEFCKSSVPTSTDFNGLKVVLDCANGATYKIAPSVFRELGAEVTVLAASPNGLNINDKCGSTHLDGLQAAVVEHHADLGIAFDGDGDRVMMVDHTGAVVDGDELLFLIARDLQESGRLQGGVVGTLMSNLGLELALQELHIPFVRAKVGDRYVMAELLARNWMLGGENSGHIVCCQNTTTGDAIIAALQVLMALKHRGQTLAEARQGIRKCPQVLINVRFKGENDPLEHPSVKEASVRVTEQMGGRGRVLLRKSGTEPLVRVMVEGDEEASVRAHAEQLAKIVSEVCA.

The active-site Phosphoserine intermediate is the Ser101. Mg(2+)-binding residues include Ser101, Asp240, Asp242, and Asp244. Ser101 carries the phosphoserine modification.

This sequence belongs to the phosphohexose mutase family. Requires Mg(2+) as cofactor. In terms of processing, activated by phosphorylation.

The catalysed reaction is alpha-D-glucosamine 1-phosphate = D-glucosamine 6-phosphate. In terms of biological role, catalyzes the conversion of glucosamine-6-phosphate to glucosamine-1-phosphate. The chain is Phosphoglucosamine mutase from Pseudomonas aeruginosa (strain UCBPP-PA14).